We begin with the raw amino-acid sequence, 126 residues long: Prefoldin subunit beta (126 aa).

It belongs to the prefoldin subunit beta family. Heterohexamer of two alpha and four beta subunits.

Its subcellular location is the cytoplasm. Functionally, molecular chaperone capable of stabilizing a range of proteins. Seems to fulfill an ATP-independent, HSP70-like function in archaeal de novo protein folding. In Methanocella arvoryzae (strain DSM 22066 / NBRC 105507 / MRE50), this protein is Prefoldin subunit beta.